The sequence spans 269 residues: Ubiquinone/menaquinone biosynthesis C-methyltransferase UbiE (269 aa).

Residues T92, D113, and 141–142 (NA) each bind S-adenosyl-L-methionine.

Belongs to the class I-like SAM-binding methyltransferase superfamily. MenG/UbiE family.

It carries out the reaction a 2-demethylmenaquinol + S-adenosyl-L-methionine = a menaquinol + S-adenosyl-L-homocysteine + H(+). The catalysed reaction is a 2-methoxy-6-(all-trans-polyprenyl)benzene-1,4-diol + S-adenosyl-L-methionine = a 5-methoxy-2-methyl-3-(all-trans-polyprenyl)benzene-1,4-diol + S-adenosyl-L-homocysteine + H(+). It functions in the pathway quinol/quinone metabolism; menaquinone biosynthesis; menaquinol from 1,4-dihydroxy-2-naphthoate: step 2/2. The protein operates within cofactor biosynthesis; ubiquinone biosynthesis. Functionally, methyltransferase required for the conversion of demethylmenaquinol (DMKH2) to menaquinol (MKH2) and the conversion of 2-polyprenyl-6-methoxy-1,4-benzoquinol (DDMQH2) to 2-polyprenyl-3-methyl-6-methoxy-1,4-benzoquinol (DMQH2). This Brucella suis (strain ATCC 23445 / NCTC 10510) protein is Ubiquinone/menaquinone biosynthesis C-methyltransferase UbiE.